We begin with the raw amino-acid sequence, 458 residues long: Phosphoglucosamine mutase (458 aa).

Residue S100 is the Phosphoserine intermediate of the active site. 4 residues coordinate Mg(2+): S100, D239, D241, and D243. S100 is modified (phosphoserine).

It belongs to the phosphohexose mutase family. Mg(2+) is required as a cofactor. Activated by phosphorylation.

It catalyses the reaction alpha-D-glucosamine 1-phosphate = D-glucosamine 6-phosphate. Functionally, catalyzes the conversion of glucosamine-6-phosphate to glucosamine-1-phosphate. In Dictyoglomus thermophilum (strain ATCC 35947 / DSM 3960 / H-6-12), this protein is Phosphoglucosamine mutase.